A 211-amino-acid chain; its full sequence is ATP-dependent Clp protease proteolytic subunit (211 aa).

Ser-106 functions as the Nucleophile in the catalytic mechanism. His-131 is an active-site residue.

Belongs to the peptidase S14 family. As to quaternary structure, fourteen ClpP subunits assemble into 2 heptameric rings which stack back to back to give a disk-like structure with a central cavity, resembling the structure of eukaryotic proteasomes.

Its subcellular location is the cytoplasm. The catalysed reaction is Hydrolysis of proteins to small peptides in the presence of ATP and magnesium. alpha-casein is the usual test substrate. In the absence of ATP, only oligopeptides shorter than five residues are hydrolyzed (such as succinyl-Leu-Tyr-|-NHMec, and Leu-Tyr-Leu-|-Tyr-Trp, in which cleavage of the -Tyr-|-Leu- and -Tyr-|-Trp bonds also occurs).. Its function is as follows. Cleaves peptides in various proteins in a process that requires ATP hydrolysis. Has a chymotrypsin-like activity. Plays a major role in the degradation of misfolded proteins. The sequence is that of ATP-dependent Clp protease proteolytic subunit from Nitrobacter hamburgensis (strain DSM 10229 / NCIMB 13809 / X14).